The sequence spans 124 residues: Small ribosomal subunit protein uS12 (124 aa).

Position 89 is a 3-methylthioaspartic acid (D89). A disordered region spans residues 104–124 (TDGVENRKQSRSKYGTKRPKK). Basic residues predominate over residues 112 to 124 (QSRSKYGTKRPKK).

This sequence belongs to the universal ribosomal protein uS12 family. Part of the 30S ribosomal subunit. Contacts proteins S8 and S17. May interact with IF1 in the 30S initiation complex.

Functionally, with S4 and S5 plays an important role in translational accuracy. Interacts with and stabilizes bases of the 16S rRNA that are involved in tRNA selection in the A site and with the mRNA backbone. Located at the interface of the 30S and 50S subunits, it traverses the body of the 30S subunit contacting proteins on the other side and probably holding the rRNA structure together. The combined cluster of proteins S8, S12 and S17 appears to hold together the shoulder and platform of the 30S subunit. The sequence is that of Small ribosomal subunit protein uS12 from Thermosipho melanesiensis (strain DSM 12029 / CIP 104789 / BI429).